Here is a 231-residue protein sequence, read N- to C-terminus: MPQLTKKQKAMQGKVDSTRLYAFTDALVLVKQAATAKFDESIDVAVQLGIDAKKSDQVVRGAVVLPNGTGKITRVAVFAQGAKAEEAKAAGADVVGMDDLAAMVKAGDMPFDVVIAAPDAMRVVGTLGQILGPRGLMPNPKVGTVTPDVALAVKNAKAGQVQFRANKAGIVHSTIGRRSFDDAKLQGNLAALIDALNKTKPASSKGQYLRKLALSSTMGVGVRVDTQSITV.

This sequence belongs to the universal ribosomal protein uL1 family. In terms of assembly, part of the 50S ribosomal subunit.

Binds directly to 23S rRNA. The L1 stalk is quite mobile in the ribosome, and is involved in E site tRNA release. In terms of biological role, protein L1 is also a translational repressor protein, it controls the translation of the L11 operon by binding to its mRNA. The chain is Large ribosomal subunit protein uL1 from Verminephrobacter eiseniae (strain EF01-2).